The sequence spans 141 residues: Large ribosomal subunit protein uL11 (141 aa).

The protein belongs to the universal ribosomal protein uL11 family. In terms of assembly, part of the ribosomal stalk of the 50S ribosomal subunit. Interacts with L10 and the large rRNA to form the base of the stalk. L10 forms an elongated spine to which L12 dimers bind in a sequential fashion forming a multimeric L10(L12)X complex. Post-translationally, one or more lysine residues are methylated.

Its function is as follows. Forms part of the ribosomal stalk which helps the ribosome interact with GTP-bound translation factors. This chain is Large ribosomal subunit protein uL11, found in Aliarcobacter butzleri (strain RM4018) (Arcobacter butzleri).